Reading from the N-terminus, the 351-residue chain is tRNA N6-adenosine threonylcarbamoyltransferase (351 aa).

2 residues coordinate Fe cation: His111 and His115. Residues 134 to 138, Asp167, Gly180, and Asn276 each bind substrate; that span reads LVSGG. Asp304 contacts Fe cation.

The protein belongs to the KAE1 / TsaD family. Fe(2+) serves as cofactor.

The protein resides in the cytoplasm. It catalyses the reaction L-threonylcarbamoyladenylate + adenosine(37) in tRNA = N(6)-L-threonylcarbamoyladenosine(37) in tRNA + AMP + H(+). Functionally, required for the formation of a threonylcarbamoyl group on adenosine at position 37 (t(6)A37) in tRNAs that read codons beginning with adenine. Is involved in the transfer of the threonylcarbamoyl moiety of threonylcarbamoyl-AMP (TC-AMP) to the N6 group of A37, together with TsaE and TsaB. TsaD likely plays a direct catalytic role in this reaction. The protein is tRNA N6-adenosine threonylcarbamoyltransferase of Marinobacter nauticus (strain ATCC 700491 / DSM 11845 / VT8) (Marinobacter aquaeolei).